Here is a 331-residue protein sequence, read N- to C-terminus: Probable allantoicase (331 aa).

This sequence belongs to the allantoicase family.

The catalysed reaction is allantoate + H2O = (S)-ureidoglycolate + urea. It participates in nitrogen metabolism; (S)-allantoin degradation; (S)-ureidoglycolate from allantoate (aminidohydrolase route): step 1/1. The chain is Probable allantoicase from Pseudomonas fluorescens (strain ATCC BAA-477 / NRRL B-23932 / Pf-5).